The following is a 460-amino-acid chain: Squalene synthase (460 aa).

A helical membrane pass occupies residues 425 to 445 (ISILFVFFIILVCLAVIFYVF).

This sequence belongs to the phytoene/squalene synthase family. Interacts with pof14. The cofactor is Mg(2+).

It localises to the endoplasmic reticulum membrane. The catalysed reaction is 2 (2E,6E)-farnesyl diphosphate + NADPH + H(+) = squalene + 2 diphosphate + NADP(+). It carries out the reaction 2 (2E,6E)-farnesyl diphosphate + NADH + H(+) = squalene + 2 diphosphate + NAD(+). Its pathway is terpene metabolism; lanosterol biosynthesis; lanosterol from farnesyl diphosphate: step 1/3. The protein operates within steroid metabolism; ergosterol biosynthesis. In terms of biological role, squalene synthase; part of the third module of ergosterol biosynthesis pathway that includes by the late steps of the pathway. Erg9 produces squalene from 2 farnesyl pyrophosphate moieties. The third module or late pathway involves the ergosterol synthesis itself through consecutive reactions that mainly occur in the endoplasmic reticulum (ER) membrane. Firstly, the squalene synthase erg9 catalyzes the condensation of 2 farnesyl pyrophosphate moieties to form squalene, which is the precursor of all steroids. Secondly, squalene is converted into lanosterol by the consecutive action of the squalene epoxidase erg1 and the lanosterol synthase erg7. The lanosterol 14-alpha-demethylase erg11/cyp1 catalyzes C14-demethylation of lanosterol to produce 4,4'-dimethyl cholesta-8,14,24-triene-3-beta-ol. In the next steps, a complex process involving various demethylation, reduction and desaturation reactions catalyzed by the C-14 reductase erg24 and the C-4 demethylation complex erg25-erg26-erg27 leads to the production of zymosterol. Erg28 likely functions in the C-4 demethylation complex reaction by tethering erg26 and Erg27 to the endoplasmic reticulum or to facilitate interaction between these proteins. Then, the sterol 24-C-methyltransferase erg6 catalyzes the methyl transfer from S-adenosyl-methionine to the C-24 of zymosterol to form fecosterol. The C-8 sterol isomerase erg2 catalyzes the reaction which results in unsaturation at C-7 in the B ring of sterols and thus converts fecosterol to episterol. The sterol-C5-desaturases erg31 and erg32 then catalyze the introduction of a C-5 double bond in the B ring to produce 5-dehydroepisterol. The C-22 sterol desaturase erg5 further converts 5-dehydroepisterol into ergosta-5,7,22,24(28)-tetraen-3beta-ol by forming the C-22(23) double bond in the sterol side chain. Finally, ergosta-5,7,22,24(28)-tetraen-3beta-ol is substrate of the C-24(28) sterol reductase erg4 to produce ergosterol. In the genus Schizosaccharomyces, a second route exists between lanosterol and fecosterol, via the methylation of lanosterol to eburicol by erg6, followed by C14-demethylation by erg11/cyp1 and C4-demethylation by the demethylation complex erg25-erg26-erg27. In Schizosaccharomyces pombe (strain 972 / ATCC 24843) (Fission yeast), this protein is Squalene synthase.